A 566-amino-acid polypeptide reads, in one-letter code: Sodium-dependent high-affinity dicarboxylate transporter 3 (566 aa).

The next 12 membrane-spanning stretches (helical) occupy residues 55–75 (LVLV…GPEW), 92–112 (VMPL…VGVL), 123–139 (NDTN…AAAV), 162–182 (WIML…SNTA), 219–239 (MATG…TGTA), 268–288 (WIFF…MTLV), 329–349 (ILLS…GVFF), 352–372 (GAYT…VLPS), 400–420 (ETFP…AAGV), 439–459 (LPLW…TNIC), 496–516 (FAFI…SGMV), and 521–541 (MAFV…LYMN).

The protein belongs to the SLC13A/DASS transporter (TC 2.A.47) family. NADC subfamily. As to expression, nad-1 and nad-2 are coexpressed in the intestinal tract from early larvae to adults, expression is from the pharynx through to the anus. Expression level is significantly greater in the anterior half of the intestine than in the posterior half.

It is found in the membrane. In terms of biological role, high-affinity sodium-dicarboxylate cotransporter that accepts a range of tricarboxylic acid-cycle intermediates with 4-5 carbon atoms. There is no interaction with monocarboxylates. Plays a role in the regulation of life span. The polypeptide is Sodium-dependent high-affinity dicarboxylate transporter 3 (nac-3) (Caenorhabditis elegans).